The sequence spans 339 residues: GTPase Obg (339 aa).

In terms of domain architecture, Obg spans 1-159 (MKFVDEAFVR…RELKLELKLL (159 aa)). Positions 127–147 (NTHFKSSTNRAPRRTTSGEEG) are disordered. In terms of domain architecture, OBG-type G spans 160-333 (ADVGLLGLPN…LCYDLMSFLE (174 aa)). GTP-binding positions include 166–173 (GLPNAGKS), 191–195 (FTTLY), 213–216 (DIPG), 283–286 (NKID), and 314–316 (SAI). The Mg(2+) site is built by S173 and T193.

This sequence belongs to the TRAFAC class OBG-HflX-like GTPase superfamily. OBG GTPase family. As to quaternary structure, monomer. It depends on Mg(2+) as a cofactor.

The protein resides in the cytoplasm. In terms of biological role, an essential GTPase which binds GTP, GDP and possibly (p)ppGpp with moderate affinity, with high nucleotide exchange rates and a fairly low GTP hydrolysis rate. Plays a role in control of the cell cycle, stress response, ribosome biogenesis and in those bacteria that undergo differentiation, in morphogenesis control. The sequence is that of GTPase Obg from Coxiella burnetii (strain CbuG_Q212) (Coxiella burnetii (strain Q212)).